The primary structure comprises 170 residues: Lipoprotein signal peptidase (170 aa).

4 consecutive transmembrane segments (helical) span residues L11–F31, I41–S61, W69–L89, and N95–Y115. Catalysis depends on residues D125 and D144. Residues Y136–L156 form a helical membrane-spanning segment.

This sequence belongs to the peptidase A8 family.

It localises to the cell inner membrane. It catalyses the reaction Release of signal peptides from bacterial membrane prolipoproteins. Hydrolyzes -Xaa-Yaa-Zaa-|-(S,diacylglyceryl)Cys-, in which Xaa is hydrophobic (preferably Leu), and Yaa (Ala or Ser) and Zaa (Gly or Ala) have small, neutral side chains.. It functions in the pathway protein modification; lipoprotein biosynthesis (signal peptide cleavage). In terms of biological role, this protein specifically catalyzes the removal of signal peptides from prolipoproteins. The chain is Lipoprotein signal peptidase from Pseudomonas fluorescens (strain Pf0-1).